The following is a 193-amino-acid chain: Molybdenum cofactor guanylyltransferase (193 aa).

GTP contacts are provided by residues 8 to 10 (LAG), lysine 21, aspartate 67, and aspartate 98. Residue aspartate 98 coordinates Mg(2+).

It belongs to the MobA family. As to quaternary structure, monomer. It depends on Mg(2+) as a cofactor.

The protein resides in the cytoplasm. It carries out the reaction Mo-molybdopterin + GTP + H(+) = Mo-molybdopterin guanine dinucleotide + diphosphate. Transfers a GMP moiety from GTP to Mo-molybdopterin (Mo-MPT) cofactor (Moco or molybdenum cofactor) to form Mo-molybdopterin guanine dinucleotide (Mo-MGD) cofactor. In Cereibacter sphaeroides (Rhodobacter sphaeroides), this protein is Molybdenum cofactor guanylyltransferase.